The following is a 134-amino-acid chain: Holo-[acyl-carrier-protein] synthase (134 aa).

Residues D8 and E58 each coordinate Mg(2+).

This sequence belongs to the P-Pant transferase superfamily. AcpS family. It depends on Mg(2+) as a cofactor.

It is found in the cytoplasm. The enzyme catalyses apo-[ACP] + CoA = holo-[ACP] + adenosine 3',5'-bisphosphate + H(+). Functionally, transfers the 4'-phosphopantetheine moiety from coenzyme A to a Ser of acyl-carrier-protein. The protein is Holo-[acyl-carrier-protein] synthase of Acidiphilium cryptum (strain JF-5).